We begin with the raw amino-acid sequence, 185 residues long: Threonylcarbamoyl-AMP synthase (185 aa).

The YrdC-like domain maps to 4–185 (SWRVQQAAQN…IATGQVMRAG (182 aa)).

Belongs to the SUA5 family. TsaC subfamily.

It is found in the cytoplasm. It catalyses the reaction L-threonine + hydrogencarbonate + ATP = L-threonylcarbamoyladenylate + diphosphate + H2O. In terms of biological role, required for the formation of a threonylcarbamoyl group on adenosine at position 37 (t(6)A37) in tRNAs that read codons beginning with adenine. Catalyzes the conversion of L-threonine, HCO(3)(-)/CO(2) and ATP to give threonylcarbamoyl-AMP (TC-AMP) as the acyladenylate intermediate, with the release of diphosphate. This chain is Threonylcarbamoyl-AMP synthase, found in Pseudomonas syringae pv. tomato (strain ATCC BAA-871 / DC3000).